The chain runs to 329 residues: DNA-directed RNA polymerase subunit alpha (329 aa).

The alpha N-terminal domain (alpha-NTD) stretch occupies residues 1-234; it reads MSGSVTEFLK…EQLDAFVELR (234 aa). The interval 248-329 is alpha C-terminal domain (alpha-CTD); the sequence is FDPILLRPVD…WPPESIAEKD (82 aa).

Belongs to the RNA polymerase alpha chain family. Homodimer. The RNAP catalytic core consists of 2 alpha, 1 beta, 1 beta' and 1 omega subunit. When a sigma factor is associated with the core the holoenzyme is formed, which can initiate transcription.

The catalysed reaction is RNA(n) + a ribonucleoside 5'-triphosphate = RNA(n+1) + diphosphate. Its function is as follows. DNA-dependent RNA polymerase catalyzes the transcription of DNA into RNA using the four ribonucleoside triphosphates as substrates. The chain is DNA-directed RNA polymerase subunit alpha from Pseudoalteromonas atlantica (strain T6c / ATCC BAA-1087).